Reading from the N-terminus, the 63-residue chain is Cytochrome c oxidase subunit 7C, mitochondrial (63 aa).

The N-terminal 16 residues, 1–16 (MLGQSIRRFTTSVVRR), are a transit peptide targeting the mitochondrion. Topologically, residues 17 to 33 (SHYEEGPGKNLPFSVEN) are mitochondrial matrix. The residue at position 25 (lysine 25) is an N6-acetyllysine; alternate. Lysine 25 is subject to N6-succinyllysine; alternate. The chain crosses the membrane as a helical span at residues 34 to 60 (KWRLLLMMTVYFGSGFAAPFFIVRHQL). The Mitochondrial intermembrane segment spans residues 61–63 (LKK).

It belongs to the cytochrome c oxidase VIIc family. As to quaternary structure, component of the cytochrome c oxidase (complex IV, CIV), a multisubunit enzyme composed of 14 subunits. The complex is composed of a catalytic core of 3 subunits MT-CO1, MT-CO2 and MT-CO3, encoded in the mitochondrial DNA, and 11 supernumerary subunits COX4I, COX5A, COX5B, COX6A, COX6B, COX6C, COX7A, COX7B, COX7C, COX8 and NDUFA4, which are encoded in the nuclear genome. The complex exists as a monomer or a dimer and forms supercomplexes (SCs) in the inner mitochondrial membrane with NADH-ubiquinone oxidoreductase (complex I, CI) and ubiquinol-cytochrome c oxidoreductase (cytochrome b-c1 complex, complex III, CIII), resulting in different assemblies (supercomplex SCI(1)III(2)IV(1) and megacomplex MCI(2)III(2)IV(2)). Interacts with RAB5IF.

It is found in the mitochondrion inner membrane. The protein operates within energy metabolism; oxidative phosphorylation. Component of the cytochrome c oxidase, the last enzyme in the mitochondrial electron transport chain which drives oxidative phosphorylation. The respiratory chain contains 3 multisubunit complexes succinate dehydrogenase (complex II, CII), ubiquinol-cytochrome c oxidoreductase (cytochrome b-c1 complex, complex III, CIII) and cytochrome c oxidase (complex IV, CIV), that cooperate to transfer electrons derived from NADH and succinate to molecular oxygen, creating an electrochemical gradient over the inner membrane that drives transmembrane transport and the ATP synthase. Cytochrome c oxidase is the component of the respiratory chain that catalyzes the reduction of oxygen to water. Electrons originating from reduced cytochrome c in the intermembrane space (IMS) are transferred via the dinuclear copper A center (CU(A)) of subunit 2 and heme A of subunit 1 to the active site in subunit 1, a binuclear center (BNC) formed by heme A3 and copper B (CU(B)). The BNC reduces molecular oxygen to 2 water molecules using 4 electrons from cytochrome c in the IMS and 4 protons from the mitochondrial matrix. The polypeptide is Cytochrome c oxidase subunit 7C, mitochondrial (Cox7c) (Rattus norvegicus (Rat)).